We begin with the raw amino-acid sequence, 108 residues long: UPF0060 membrane protein YE2027 (108 aa).

4 helical membrane passes run leucine 6–leucine 26, glycine 29–leucine 49, valine 59–aspartate 79, and leucine 85–tryptophan 105.

This sequence belongs to the UPF0060 family.

It is found in the cell inner membrane. The protein is UPF0060 membrane protein YE2027 of Yersinia enterocolitica serotype O:8 / biotype 1B (strain NCTC 13174 / 8081).